The sequence spans 1164 residues: MKKNTDSEMDQRLGYKFLVPDPKAGVFYRPLHFQYVSYSNFILHRLHEILTVKRPLLSFKNNTERIMIEISNVKVTPPDYSPIIASIKGKSYDALATFTVNIFKEVMTKEGISITKISSYEGKDSHLIKIPLLIGYGNKNPLDTAKYLVPNVIGGVFINKQSVEKVGINLVEKITTWPKFRVVKPNSFTFSFSSVSPPNVLPTRYRHYKISLDISQLEASNISSTKTFITVNIVLLSQYLSRVSLEFIRRSLSYDMPPEVVYLVNAIIDSAKRLTESITDFNIDTYINDLVEAEHIKQKSQLTINEFKYEMLHNFLPHMNYTPDQLKGFYMISLLRKFLYCIYHTSRYPDRDSMVCHRILTYGKYFETLAHDELENYIGNIRNDIMNNHKNRGTYAVNIHVLTTPGLNHAFSSLLSGKFKKSDGSYRTHPHYSWMQNISIPRSVGFYPDQVKISKMFSVRKYHPSQYLYFCSSDVPERGPQVGLVSQLSVLSSITNILTSEYLDLEKKICEYIRSYYKDDISYFETGFPITIENALVASLNPNMICDFVTDFRRRKRMGFFGNLEVGITLVRDHMNEIRINIGAGRLVRPFLVVDNGELMMDVCPELESRLDDMTFSDIQKEFPHVIEMVDIEQFTFSNVCESVQKFRMMSKDERKQYDLCDFPAEFRDGYVASSLVGINHNSGPRAILGCAQAKQAISCLSSDIRNKIDNGIHLMYPERPIVISKALETSKIAANCFGQHVTIALMSYKGINQEDGIIIKKQFIQRGGLDIVTAKKHQVEIPLENFNNKERDRSNAYSKLESNGLVRLNAFLESGDAMARNISSRTLEDDFARDNQISFDVSEKYTDMYKSRVERVQVELTDKVKVRVLTMKERRPILGDKFTTRTSQKGTVAYIADETELPYDENGITPDVIINSTSIFSRKTISMLIEVILTAAYSTKPYNNKGENRPVCFPSSNETSIDAYMQFAKQCYEYSNPKLSEEELSDKIFCEKILYDPETDKPYESKVFFGPIYYLRLRHLTQDKATVRCRGKKTKLIRQANEGRKRGGGIKFGEMERDCLIAHGAANTITEVLKDSEEDYQDVYICENCGDIAAQIKSINTCLRCSKLNLSPLLTKIDTTHVSKVFLTQMNARGVKVKLDFERRPPSFYKPLDKVDLKPSFLV.

This sequence belongs to the RNA polymerase beta chain family. The DNA-dependent RNA polymerase used for intermediate and late genes expression consists of eight subunits 147 kDa, 133 kDa, 35 kDa, 30 kDa, 22 kDa, 19 kDa, 18 kDa and 7 kDa totalling more than 500 kDa in mass. The same holoenzyme, with the addition of the transcription-specificity factor RAP94, is used for early gene expression.

It is found in the virion. The catalysed reaction is RNA(n) + a ribonucleoside 5'-triphosphate = RNA(n+1) + diphosphate. Part of the DNA-dependent RNA polymerase which catalyzes the transcription of viral DNA into RNA using the four ribonucleoside triphosphates as substrates. Responsible for the transcription of early, intermediate and late genes. DNA-dependent RNA polymerase associates with the early transcription factor (ETF), itself composed of OPG118 and OPG133, thereby allowing the early genes transcription. Late transcription, and probably also intermediate transcription, require newly synthesized RNA polymerase. The sequence is that of DNA-directed RNA polymerase (OPG151) from Monkeypox virus.